A 92-amino-acid chain; its full sequence is MTRSLKKNPFVANHLLGRIEKLNRREEKEIIVTWSRASTIIPTMIGHTIAIHNGKEHLPIYITDRMVGHKLGEFAPTLTFVRHARNDKKSRR.

This sequence belongs to the universal ribosomal protein uS19 family.

The protein resides in the plastid. The protein localises to the chloroplast. In terms of biological role, protein S19 forms a complex with S13 that binds strongly to the 16S ribosomal RNA. This chain is Small ribosomal subunit protein uS19c, found in Phalaenopsis aphrodite subsp. formosana (Moth orchid).